Reading from the N-terminus, the 291-residue chain is Elongation factor Ts (291 aa).

Residues 79 to 82 are involved in Mg(2+) ion dislocation from EF-Tu; it reads TDFV.

It belongs to the EF-Ts family.

It is found in the cytoplasm. Functionally, associates with the EF-Tu.GDP complex and induces the exchange of GDP to GTP. It remains bound to the aminoacyl-tRNA.EF-Tu.GTP complex up to the GTP hydrolysis stage on the ribosome. In Anaplasma marginale (strain St. Maries), this protein is Elongation factor Ts.